The chain runs to 351 residues: Cytosolic sulfotransferase 9 (351 aa).

The segment covering 1–11 has biased composition (basic and acidic residues); that stretch reads MDEKDILRNLR. The tract at residues 1-24 is disordered; sequence MDEKDILRNLREEEEEEEENQSEE. Acidic residues predominate over residues 12-22; sequence EEEEEEEENQS. 80–85 lines the 3'-phosphoadenylyl sulfate pocket; the sequence is KSGTTW. The active-site Proton acceptor is the H152. 3'-phosphoadenylyl sulfate-binding positions include R174, S182, Y252, and 317-319; that span reads RKG.

It belongs to the sulfotransferase 1 family. Expressed in roots and leaves.

The protein localises to the cytoplasm. In terms of biological role, sulfotransferase that utilizes 3'-phospho-5'-adenylyl sulfate (PAPS) as sulfonate donor. No activity with brassinosteroids. This chain is Cytosolic sulfotransferase 9 (STO9), found in Arabidopsis thaliana (Mouse-ear cress).